The chain runs to 384 residues: Probable protein phosphatase 2C 42 (384 aa).

The PPM-type phosphatase domain maps to 58–358; the sequence is DFSMAVIQAN…DDITVIVVFL (301 aa). Mn(2+) contacts are provided by Asp-89, Gly-90, Asp-290, and Asp-349.

Belongs to the PP2C family. The cofactor is Mg(2+). Mn(2+) is required as a cofactor.

The catalysed reaction is O-phospho-L-seryl-[protein] + H2O = L-seryl-[protein] + phosphate. It carries out the reaction O-phospho-L-threonyl-[protein] + H2O = L-threonyl-[protein] + phosphate. Functionally, dephosphorylates and represses plasma membrane H(+)-ATPases (PM H(+)-ATPases, e.g. AHA1 and AHA2), thus influencing negatively plant growth and fitness. Promotes the apical hook maintenance of etiolated seedlings. The sequence is that of Probable protein phosphatase 2C 42 from Arabidopsis thaliana (Mouse-ear cress).